The following is a 530-amino-acid chain: GATA zinc finger domain-containing protein 4 (530 aa).

Disordered stretches follow at residues Met-1–Asn-27 and Ser-212–Asn-386. 3 stretches are compositionally biased toward low complexity: residues Asn-7–Asn-17, Ser-216–Asn-290, and Asn-299–Asn-386. The segment at Cys-494–Cys-518 adopts a GATA-type zinc-finger fold.

The polypeptide is GATA zinc finger domain-containing protein 4 (gtaD) (Dictyostelium discoideum (Social amoeba)).